We begin with the raw amino-acid sequence, 74 residues long: Putative Fe(2+) transport protein A (74 aa).

The protein belongs to the FeoA family.

Might be involved in Fe(2+) ion uptake. The chain is Putative Fe(2+) transport protein A from Campylobacter jejuni subsp. jejuni serotype O:2 (strain ATCC 700819 / NCTC 11168).